Here is a 141-residue protein sequence, read N- to C-terminus: MEIRVFQQSDFEEVILLWEHCDLLRPWNDPEMDIERKLNHDPELFLVAEVSGAIVGSVMGGYDGHRGSAYYLGVHPDFRGRGFANALISRLEKKLIARGCPKLNIMVREDNDAVIGMYEKLDYETQDTIMLGKRLIVDQEY.

In terms of domain architecture, N-acetyltransferase spans 1-141; that stretch reads MEIRVFQQSD…GKRLIVDQEY (141 aa).

It belongs to the acetyltransferase family. YpeA subfamily.

The polypeptide is Acetyltransferase YE1169 (Yersinia enterocolitica serotype O:8 / biotype 1B (strain NCTC 13174 / 8081)).